The primary structure comprises 147 residues: Lipoprotein signal peptidase (147 aa).

The next 4 membrane-spanning stretches (helical) occupy residues 10-30, 34-54, 59-79, and 87-107; these read ISIF…IKFL, GIVK…GTAF, FLGS…LVYM, and WFIY…RLIY. Catalysis depends on residues aspartate 112 and aspartate 130. The chain crosses the membrane as a helical span at residues 121–141; sequence LHWPAFNVADSAISIGIVLFV.

This sequence belongs to the peptidase A8 family.

It is found in the cell inner membrane. It catalyses the reaction Release of signal peptides from bacterial membrane prolipoproteins. Hydrolyzes -Xaa-Yaa-Zaa-|-(S,diacylglyceryl)Cys-, in which Xaa is hydrophobic (preferably Leu), and Yaa (Ala or Ser) and Zaa (Gly or Ala) have small, neutral side chains.. The protein operates within protein modification; lipoprotein biosynthesis (signal peptide cleavage). This protein specifically catalyzes the removal of signal peptides from prolipoproteins. This is Lipoprotein signal peptidase from Thermodesulfovibrio yellowstonii (strain ATCC 51303 / DSM 11347 / YP87).